The following is a 531-amino-acid chain: Aspartate--tRNA ligase, cytoplasmic (531 aa).

Residues 1 to 45 (MADAAEGEQPKLSKKELNKLARKAKKDEKAGEKGGNQQQAAAMDQ) are disordered. A compositionally biased stretch (basic and acidic residues) spans 8–32 (EQPKLSKKELNKLARKAKKDEKAGE). Glutamate 259 contacts L-aspartate. Residues 281–284 (QLYK) form an aspartate region. Arginine 303 contributes to the L-aspartate binding site. ATP is bound by residues 303-305 (RAE), 311-313 (RHM), and glutamate 454. Residues serine 457 and arginine 461 each coordinate L-aspartate. 502–505 (GLER) is an ATP binding site.

It belongs to the class-II aminoacyl-tRNA synthetase family. Type 2 subfamily. Homodimer.

The protein resides in the cytoplasm. The catalysed reaction is tRNA(Asp) + L-aspartate + ATP = L-aspartyl-tRNA(Asp) + AMP + diphosphate. The chain is Aspartate--tRNA ligase, cytoplasmic from Caenorhabditis elegans.